The sequence spans 112 residues: cAMP-regulated phosphoprotein 19 (112 aa).

Met1 is subject to N-acetylmethionine. A compositionally biased stretch (low complexity) spans 1–11 (MSAEVPEAASA). The tract at residues 1-49 (MSAEVPEAASAEEQKEMEDKVTSPEKAEEAKLKARYPHLGQKPGGSDFL) is disordered. Ser2 carries the N-acetylserine modification. Phosphoserine occurs at positions 2 and 23. The span at 12 to 32 (EEQKEMEDKVTSPEKAEEAKL) shows a compositional bias: basic and acidic residues. Residues Ser62 and Ser104 each carry the phosphoserine; by GWL modification. Positions 74 to 112 (NKQLPAAAPDKTEVTGDHIPTPQDLPQRKPSLVASKLAG) are disordered. Ser104 is modified (phosphoserine; by PKA). N6-acetyllysine is present on Lys109.

This sequence belongs to the endosulfine family. Interacts (when phosphorylated at Ser-62) with PPP2R2D. Interacts with SNCA. Interacts with PPP2R2A; the interaction is direct and this interaction inhibits PP2A activity. Phosphorylation at Ser-62 by MASTL/GWL during mitosis is essential for interaction with PPP2R2D (PR55-delta) and subsequent inactivation of PP2A. Phosphorylated by PKA.

It localises to the cytoplasm. Protein phosphatase inhibitor that specifically inhibits protein phosphatase 2A (PP2A) during mitosis. Inhibition of PP2A is enhanced when ARPP19 is phosphorylated. When phosphorylated at Ser-62 during mitosis, specifically interacts with PPP2R2D (PR55-delta) and inhibits its activity, leading to inactivation of PP2A, an essential condition to keep cyclin-B1-CDK1 activity high during M phase. May indirectly enhance GAP-43 expression by binding to the NGF-regulatory region of its mRNA. This chain is cAMP-regulated phosphoprotein 19 (Arpp19), found in Mus musculus (Mouse).